A 462-amino-acid chain; its full sequence is uncharacterized protein (462 aa).

This is an uncharacterized protein from Acanthamoeba polyphaga (Amoeba).